Consider the following 101-residue polypeptide: Ascorbate-specific PTS system EIIB component (101 aa).

The region spanning 3–96 (VRILAVCGNG…KLLEVIKAHF (94 aa)) is the PTS EIIB type-2 domain. Catalysis depends on cysteine 9, which acts as the Phosphocysteine intermediate. Cysteine 9 is subject to Phosphocysteine.

It localises to the cytoplasm. It catalyses the reaction N(pros)-phospho-L-histidyl-[protein] + L-ascorbate(out) = L-ascorbate 6-phosphate(in) + L-histidyl-[protein]. In terms of biological role, the phosphoenolpyruvate-dependent sugar phosphotransferase system (sugar PTS), a major carbohydrate active transport system, catalyzes the phosphorylation of incoming sugar substrates concomitantly with their translocation across the cell membrane. The enzyme II UlaABC PTS system is involved in ascorbate transport. In Escherichia coli O6:H1 (strain CFT073 / ATCC 700928 / UPEC), this protein is Ascorbate-specific PTS system EIIB component (ulaB).